A 1134-amino-acid chain; its full sequence is Myosin-4 (1134 aa).

Positions 110–160 constitute a Myosin N-terminal SH3-like domain; sequence REKLCVWCRVAANGQWHLGKIHSTSSSDDVCVMLSANDDVRTMEEIFPANP. The Myosin motor domain maps to 164-830; the sequence is EGVEDLTQLS…VISVLEERKK (667 aa). ATP-binding positions include 255–262 and 304–312; these read GESGAGKT and NDNSSRFGK. Actin-binding regions lie at residues 589-623 and 710-732; these read LIEK…KQHL and LFKL…KPNS. IQ domains are found at residues 832–861, 855–884, and 891–920; these read VLRG…AAVI, MRNA…SAIV, and ELDA…KNKP. Positions 913–939 are disordered; the sequence is STQQKNKPRNEKKKTRRKSTKRVSEDK. The span at 918–933 shows a compositional bias: basic residues; the sequence is NKPRNEKKKTRRKSTK. The stretch at 953–999 forms a coiled coil; sequence LADLQSRVLKVEAAIMQKEDENTALQEELQRFEERWLENETRMKSME.

It belongs to the TRAFAC class myosin-kinesin ATPase superfamily. Myosin family. Plant myosin class VIII subfamily. As to quaternary structure, homodimer.

Its function is as follows. Myosin heavy chain that is required for the cell cycle-regulated transport of various organelles and proteins for their segregation. Functions by binding with its tail domain to receptor proteins on organelles and exerting force with its N-terminal motor domain against actin filaments, thereby transporting its cargo along polarized actin cables. This chain is Myosin-4 (VIII-B), found in Arabidopsis thaliana (Mouse-ear cress).